The following is a 249-amino-acid chain: DNA polymerase sliding clamp 3 (249 aa).

It belongs to the PCNA family. As to quaternary structure, homotrimer. The subunits circularize to form a toroid; DNA passes through its center. Replication factor C (RFC) is required to load the toroid on the DNA.

Sliding clamp subunit that acts as a moving platform for DNA processing. Responsible for tethering the catalytic subunit of DNA polymerase and other proteins to DNA during high-speed replication. The polypeptide is DNA polymerase sliding clamp 3 (Aeropyrum pernix (strain ATCC 700893 / DSM 11879 / JCM 9820 / NBRC 100138 / K1)).